An 86-amino-acid chain; its full sequence is Small ribosomal subunit protein uS15 (86 aa).

It belongs to the universal ribosomal protein uS15 family. Part of the 30S ribosomal subunit. Forms a bridge to the 50S subunit in the 70S ribosome, contacting the 23S rRNA.

In terms of biological role, one of the primary rRNA binding proteins, it binds directly to 16S rRNA where it helps nucleate assembly of the platform of the 30S subunit by binding and bridging several RNA helices of the 16S rRNA. Functionally, forms an intersubunit bridge (bridge B4) with the 23S rRNA of the 50S subunit in the ribosome. The sequence is that of Small ribosomal subunit protein uS15 from Mycoplasma pneumoniae (strain ATCC 29342 / M129 / Subtype 1) (Mycoplasmoides pneumoniae).